A 299-amino-acid polypeptide reads, in one-letter code: MDNIIDGKKLAENVIAKVKNETEKLKNSHNIQPGIAVIIVGDDPASQVYVASKSKKAEECGFFSMKHVLPKEVEESELLQLIEILNSDPKIHGILVQLPLPAHINTDRATQAIAVEKDVDGFHYINIGKLAANAIKDAIIPCTPAGAMMMIEQQCGQDLSGLNAVIVGRSNIVGKPMAALLTAANATVTLAHSRTRDLDEICRRADILIAAVGRPQMIKKHWVKKGAIVIDVGINRIAAPEKGPGKTRLVGDVDFEEVKGKTLAITPVPGGVGPMTIAMLMVNTLKAAARSLKLPVPKF.

Residues 168–170 (GRS), Ser193, and Ile234 each bind NADP(+).

It belongs to the tetrahydrofolate dehydrogenase/cyclohydrolase family. As to quaternary structure, homodimer.

It carries out the reaction (6R)-5,10-methylene-5,6,7,8-tetrahydrofolate + NADP(+) = (6R)-5,10-methenyltetrahydrofolate + NADPH. The enzyme catalyses (6R)-5,10-methenyltetrahydrofolate + H2O = (6R)-10-formyltetrahydrofolate + H(+). Its pathway is one-carbon metabolism; tetrahydrofolate interconversion. In terms of biological role, catalyzes the oxidation of 5,10-methylenetetrahydrofolate to 5,10-methenyltetrahydrofolate and then the hydrolysis of 5,10-methenyltetrahydrofolate to 10-formyltetrahydrofolate. This Bartonella bacilliformis (strain ATCC 35685 / KC583 / Herrer 020/F12,63) protein is Bifunctional protein FolD.